The following is an 82-amino-acid chain: Myosin light chain alkali (82 aa).

The 36-residue stretch at 7–42 (GCYEDFIECLKLYDKEENGTMLLAELQHALLALGEN) folds into the EF-hand domain.

As to quaternary structure, myosin is a hexamer of 2 heavy chains and 4 light chains.

The protein is Myosin light chain alkali (Mlc1) of Drosophila teissieri (Fruit fly).